Here is a 126-residue protein sequence, read N- to C-terminus: Protein ApaG (126 aa).

The ApaG domain occupies 2-126 (SDPRYQIDVS…FRLAVPGALH (125 aa)).

The chain is Protein ApaG from Pseudomonas entomophila (strain L48).